A 210-amino-acid polypeptide reads, in one-letter code: Na(+)-translocating NADH-quinone reductase subunit D (210 aa).

Helical transmembrane passes span 42 to 62 (FVMTLAVTFVTALSNFSVSLI), 72 to 92 (IIVQMAIIASLVIVVDQVLKA), 103 to 123 (VFVGLIITNCIVMGRAEAFAM), 131 to 151 (LIDGIGNGLGYGFVLITVGFF), and 178 to 198 (NGLMLLAPSAFFLIGFLIWVI).

The protein belongs to the NqrDE/RnfAE family. In terms of assembly, composed of six subunits; NqrA, NqrB, NqrC, NqrD, NqrE and NqrF.

Its subcellular location is the cell inner membrane. It catalyses the reaction a ubiquinone + n Na(+)(in) + NADH + H(+) = a ubiquinol + n Na(+)(out) + NAD(+). Its function is as follows. NQR complex catalyzes the reduction of ubiquinone-1 to ubiquinol by two successive reactions, coupled with the transport of Na(+) ions from the cytoplasm to the periplasm. NqrA to NqrE are probably involved in the second step, the conversion of ubisemiquinone to ubiquinol. This is Na(+)-translocating NADH-quinone reductase subunit D from Vibrio parahaemolyticus serotype O3:K6 (strain RIMD 2210633).